The primary structure comprises 279 residues: Tumor necrosis factor ligand superfamily member 6 (279 aa).

Residues 1–78 (MQQPMNYPCP…PLKKKDHNTN (78 aa)) are Cytoplasmic-facing. Residues 30–70 (FPCPSCGPRGPDQRRPPPPPPPVSPLPPPSQPLPLPPLTPL) are disordered. The segment covering 45 to 68 (PPPPPPPVSPLPPPSQPLPLPPLT) has biased composition (pro residues). The chain crosses the membrane as a helical; Signal-anchor for type II membrane protein span at residues 79 to 100 (LWLPVVFFMVLVALVGMGLGMY). The Extracellular segment spans residues 101–279 (QLFHLQKELA…SKTFFGLYKL (179 aa)). Asn117 carries an N-linked (GlcNAc...) asparagine glycan. The segment covering 126–135 (EKQIANPSTP) has biased composition (polar residues). A disordered region spans residues 126 to 150 (EKQIANPSTPSEKKEPRSVAHLTGN). The THD domain occupies 143–279 (SVAHLTGNPH…SKTFFGLYKL (137 aa)). Asn182 carries N-linked (GlcNAc...) asparagine glycosylation. An intrachain disulfide couples Cys200 to Cys231. N-linked (GlcNAc...) asparagine glycans are attached at residues Asn248 and Asn258.

The protein belongs to the tumor necrosis factor family. In terms of assembly, homotrimer. Interacts with ARHGAP9, BAIAP2L1, BTK, CACNB3, CACNB4, CRK, DLG2, DNMBP, DOCK4, EPS8L3, FGR, FYB1, FYN, HCK, ITK, ITSN2, KALRN, LYN, MACC1, MIA, MPP4, MYO15A, NCF1, NCK1, NCK2, NCKIPSD, OSTF1, PIK3R1, PSTPIP1, RIMBP3C, SAMSN1, SH3GL3, SH3PXD2B, SH3PXD2A, SH3RF2, SKAP2, SNX33, SNX9, SORBS3, SPTA1, SRC, SRGAP1, SRGAP2, SRGAP3, TEC, TJP3 and YES1. Post-translationally, the soluble form derives from the membrane form by proteolytic processing. The membrane-bound form undergoes two successive intramembrane proteolytic cleavages. The first one is processed by ADAM10 producing an N-terminal fragment, which lacks the receptor-binding extracellular domain. This ADAM10-processed FasL (FAsL APL) remnant form is still membrane anchored and further processed by SPPL2A that liberates the FasL intracellular domain (FasL ICD). FasL shedding by ADAM10 is a prerequisite for subsequent intramembrane cleavage by SPPL2A in T-cells. In terms of processing, phosphorylated by FGR on tyrosine residues; this is required for ubiquitination and subsequent internalization. N-glycosylated. Glycosylation enhances apoptotic activity. Post-translationally, monoubiquitinated. Expressed in T-cells. Expressed in natural killer cells.

The protein resides in the cell membrane. Its subcellular location is the cytoplasmic vesicle lumen. It localises to the lysosome lumen. It is found in the secreted. The protein localises to the nucleus. Cytokine that binds to TNFRSF6/FAS, a receptor that transduces the apoptotic signal into cells. Involved in cytotoxic T-cell-mediated apoptosis, natural killer cell-mediated apoptosis and in T-cell development. Initiates fratricidal/suicidal activation-induced cell death (AICD) in antigen-activated T-cells contributing to the termination of immune responses. TNFRSF6/FAS-mediated apoptosis also has a role in the induction of peripheral tolerance. Binds to TNFRSF6B/DcR3, a decoy receptor that blocks apoptosis. Its function is as follows. Induces FAS-mediated activation of NF-kappa-B, initiating non-apoptotic signaling pathways. Can induce apoptosis but does not appear to be essential for this process. Functionally, cytoplasmic form induces gene transcription inhibition. This Mus musculus (Mouse) protein is Tumor necrosis factor ligand superfamily member 6 (Faslg).